The sequence spans 153 residues: Arginine repressor (153 aa).

It belongs to the ArgR family.

The protein localises to the cytoplasm. It functions in the pathway amino-acid biosynthesis; L-arginine biosynthesis [regulation]. Regulates arginine biosynthesis genes. This chain is Arginine repressor, found in Glaesserella parasuis serovar 5 (strain SH0165) (Haemophilus parasuis).